We begin with the raw amino-acid sequence, 162 residues long: Large ribosomal subunit protein uL22c (162 aa).

The protein belongs to the universal ribosomal protein uL22 family. As to quaternary structure, part of the 50S ribosomal subunit.

It localises to the plastid. The protein resides in the chloroplast. Its function is as follows. This protein binds specifically to 23S rRNA. In terms of biological role, the globular domain of the protein is located near the polypeptide exit tunnel on the outside of the subunit, while an extended beta-hairpin is found that lines the wall of the exit tunnel in the center of the 70S ribosome. The chain is Large ribosomal subunit protein uL22c (rpl22) from Cucumis sativus (Cucumber).